The sequence spans 475 residues: Trifunctional enzyme subunit beta, mitochondrial (475 aa).

The N-terminal 34 residues, M1–R34, are a transit peptide targeting the mitochondrion. Position 73 is an N6-acetyllysine; alternate (K73). Position 73 is an N6-succinyllysine; alternate (K73). Catalysis depends on C139, which acts as the Acyl-thioester intermediate. Residues I174 to S221 lie within the membrane without spanning it. At K189 the chain carries N6-acetyllysine; alternate. K189 carries the post-translational modification N6-succinyllysine; alternate. N6-succinyllysine is present on residues K191, K273, and K292. At K294 the chain carries N6-acetyllysine; alternate. N6-succinyllysine; alternate is present on K294. K299 carries the N6-acetyllysine modification. Residue K333 is modified to N6-acetyllysine; alternate. Residue K333 is modified to N6-succinyllysine; alternate. 2 positions are modified to N6-acetyllysine: K349 and K362. Catalysis depends on C459, which acts as the Proton donor/acceptor.

The protein belongs to the thiolase-like superfamily. Thiolase family. In terms of assembly, heterotetramer of 2 alpha/HADHA and 2 beta/HADHB subunits; forms the mitochondrial trifunctional enzyme. Also purified as higher order heterooligomers including a 4 alpha/HADHA and 4 beta/HADHB heterooligomer which physiological significance remains unclear. The mitochondrial trifunctional enzyme interacts with MTLN. Interacts with RSAD2/viperin.

The protein resides in the mitochondrion. It is found in the mitochondrion inner membrane. The protein localises to the mitochondrion outer membrane. It localises to the endoplasmic reticulum. The catalysed reaction is an acyl-CoA + acetyl-CoA = a 3-oxoacyl-CoA + CoA. It catalyses the reaction butanoyl-CoA + acetyl-CoA = 3-oxohexanoyl-CoA + CoA. The enzyme catalyses hexanoyl-CoA + acetyl-CoA = 3-oxooctanoyl-CoA + CoA. It carries out the reaction octanoyl-CoA + acetyl-CoA = 3-oxodecanoyl-CoA + CoA. The catalysed reaction is decanoyl-CoA + acetyl-CoA = 3-oxododecanoyl-CoA + CoA. It catalyses the reaction dodecanoyl-CoA + acetyl-CoA = 3-oxotetradecanoyl-CoA + CoA. The enzyme catalyses tetradecanoyl-CoA + acetyl-CoA = 3-oxohexadecanoyl-CoA + CoA. Its pathway is lipid metabolism; fatty acid beta-oxidation. In terms of biological role, mitochondrial trifunctional enzyme catalyzes the last three of the four reactions of the mitochondrial beta-oxidation pathway. The mitochondrial beta-oxidation pathway is the major energy-producing process in tissues and is performed through four consecutive reactions breaking down fatty acids into acetyl-CoA. Among the enzymes involved in this pathway, the trifunctional enzyme exhibits specificity for long-chain fatty acids. Mitochondrial trifunctional enzyme is a heterotetrameric complex composed of two proteins, the trifunctional enzyme subunit alpha/HADHA carries the 2,3-enoyl-CoA hydratase and the 3-hydroxyacyl-CoA dehydrogenase activities, while the trifunctional enzyme subunit beta/HADHB described here bears the 3-ketoacyl-CoA thiolase activity. This is Trifunctional enzyme subunit beta, mitochondrial (HADHB) from Pan troglodytes (Chimpanzee).